The following is a 219-amino-acid chain: MAPPSRHCLLLISTLGVFALNCFTKGQKNSTLIFTRENTIRNCSCSADIRDCDYSLANLMCNCKTVLPLAVERTSYNGHLTIWFTDTSALGHLLNFTLVQDLKLSLCSTNTLPTEYLAICGLKRLRINMEAKHPFPEQSLLIHSGGDSDSREKPMWLHKGWQPCMYISFLDMALFNRDSALKSYSIENVTSIANNFPDFSYFRTFPMPSNKSYVVTFIY.

The first 19 residues, Met-1–Ala-19, serve as a signal peptide directing secretion. Asn-29, Asn-42, Asn-95, Asn-188, and Asn-210 each carry an N-linked (GlcNAc...) asparagine glycan.

Belongs to the EPCIP family. In terms of assembly, homooligomer. Interacts with PKD1 (via the PKD repeats in the N-terminal extracellular region); the interaction is not dependent on N-glycosylation of either protein. Post-translationally, N-glycosylated. As to expression, detected in the kidney and in the endothelium of large blood vessels (at protein level).

It is found in the vesicle. The protein resides in the secreted. It localises to the extracellular exosome. Functionally, likely to be involved with PKD1 in the detection, sequestration and exocytosis of senescent mitochondria. The polypeptide is Exosomal polycystin-1-interacting protein (Homo sapiens (Human)).